Consider the following 303-residue polypeptide: GPN-loop GTPase 2 (303 aa).

Position 29–34 (29–34 (GSGKST)) interacts with GTP. The short motif at 85-87 (GPN) is the Gly-Pro-Asn (GPN)-loop; involved in dimer interface element. Residue 187–190 (SKMD) participates in GTP binding.

It belongs to the GPN-loop GTPase family. In terms of assembly, heterodimers with gpn1 or gpn3. Binds to RNA polymerase II (RNAPII).

In terms of biological role, small GTPase required for proper localization of RNA polymerase II and III (RNAPII and RNAPIII). May act at an RNAP assembly step prior to nuclear import. This chain is GPN-loop GTPase 2, found in Xenopus tropicalis (Western clawed frog).